A 244-amino-acid polypeptide reads, in one-letter code: UPF0246 protein SGO_1307 (244 aa).

It belongs to the UPF0246 family.

The protein is UPF0246 protein SGO_1307 of Streptococcus gordonii (strain Challis / ATCC 35105 / BCRC 15272 / CH1 / DL1 / V288).